We begin with the raw amino-acid sequence, 254 residues long: Bacteriorhodopsin-I (254 aa).

Positions 1-6 are excised as a propeptide; that stretch reads MSQLAL. Q7 bears the Pyrrolidone carboxylic acid mark. Helical transmembrane passes span 16-36, 51-71, 91-111, 116-136, 144-164, 185-205, and 212-232; these read EGIW…YFIA, VITI…FFGF, YADW…LAGA, IGAL…ATLT, AFWT…VAVF, IILV…EGLA, and ETLL…FILL. Position 224 is an N6-(retinylidene)lysine (K224).

Belongs to the archaeal/bacterial/fungal opsin family. The covalent binding of retinal to the apoprotein, bacterioopsin, generates bacteriorhodopsin.

It localises to the cell membrane. In terms of biological role, light-driven proton pump. The sequence is that of Bacteriorhodopsin-I (bop1) from Haloquadratum walsbyi (strain DSM 16854 / JCM 12705 / C23).